Consider the following 174-residue polypeptide: Large ribosomal subunit protein uL10 (174 aa).

This sequence belongs to the universal ribosomal protein uL10 family. As to quaternary structure, part of the ribosomal stalk of the 50S ribosomal subunit. The N-terminus interacts with L11 and the large rRNA to form the base of the stalk. The C-terminus forms an elongated spine to which L12 dimers bind in a sequential fashion forming a multimeric L10(L12)X complex.

In terms of biological role, forms part of the ribosomal stalk, playing a central role in the interaction of the ribosome with GTP-bound translation factors. In Bordetella petrii (strain ATCC BAA-461 / DSM 12804 / CCUG 43448), this protein is Large ribosomal subunit protein uL10.